A 274-amino-acid chain; its full sequence is Ciliary microtubule inner protein 2B (274 aa).

2 disordered regions span residues 46-89 (SPGL…SSMV) and 119-171 (TQRN…MDDR). The segment covering 130-155 (LPKEAKGEKDVEKDQEPKPEVEKEPE) has biased composition (basic and acidic residues).

It belongs to the CIMIP2 family. As to quaternary structure, microtubule inner protein component of sperm flagellar doublet microtubules. As to expression, expressed in trachea multiciliated cells.

It localises to the cytoplasm. It is found in the cytoskeleton. The protein localises to the cilium axoneme. Its subcellular location is the flagellum axoneme. In terms of biological role, microtubule inner protein (MIP) part of the dynein-decorated doublet microtubules (DMTs) in cilia axoneme, which is required for motile cilia beating. The sequence is that of Ciliary microtubule inner protein 2B (CIMIP2B) from Bos taurus (Bovine).